A 223-amino-acid polypeptide reads, in one-letter code: Ion-translocating oxidoreductase complex subunit E (223 aa).

The next 6 membrane-spanning stretches (helical) occupy residues 17-37, 40-60, 70-90, 94-114, 129-149, and 182-202; these read NGVL…GTAT, LGMG…VAMF, IPVY…GMNA, ELYK…LPLA, FLDG…IGAV, and WGIL…LMVV.

Belongs to the NqrDE/RnfAE family. The complex is composed of six subunits: RnfA, RnfB, RnfC, RnfD, RnfE and RnfG.

The protein resides in the cell inner membrane. Its function is as follows. Part of a membrane-bound complex that couples electron transfer with translocation of ions across the membrane. This chain is Ion-translocating oxidoreductase complex subunit E, found in Paramagnetospirillum magneticum (strain ATCC 700264 / AMB-1) (Magnetospirillum magneticum).